Reading from the N-terminus, the 362-residue chain is Heat-inducible transcription repressor HrcA (362 aa).

This sequence belongs to the HrcA family.

Functionally, negative regulator of class I heat shock genes (grpE-dnaK-dnaJ and groELS operons). Prevents heat-shock induction of these operons. This chain is Heat-inducible transcription repressor HrcA, found in Rhizobium etli (strain CIAT 652).